Consider the following 384-residue polypeptide: WAT1-related protein At4g08290 (384 aa).

10 helical membrane passes run 15 to 35, 43 to 63, 73 to 93, 104 to 124, 140 to 160, 186 to 206, 219 to 239, 255 to 275, 282 to 302, and 307 to 327; these read LLMI…MATL, VVIV…ALIF, LSVL…DQGF, TYTS…AWIL, IIGT…KGPL, WVVG…FYVL, SLSA…ALVV, FAPL…QGMV, VFVT…ASFI, and IHFG…MVVW. EamA domains follow at residues 25-154 and 198-326; these read AGTY…LVMT and VAWS…YMVV.

The protein belongs to the drug/metabolite transporter (DMT) superfamily. Plant drug/metabolite exporter (P-DME) (TC 2.A.7.4) family.

It is found in the membrane. This Arabidopsis thaliana (Mouse-ear cress) protein is WAT1-related protein At4g08290.